The following is a 202-amino-acid chain: Ig delta chain C region (202 aa).

The interval 32–58 (KSKTFKLPETRNSQSSKKANPTPQAKN) is disordered. Polar residues predominate over residues 41–56 (TRNSQSSKKANPTPQA). Residues 66–178 (PTATKNIVGA…TKLNASKSLE (113 aa)) form the Ig-like domain.

The chain is Ig delta chain C region from Rattus norvegicus (Rat).